A 513-amino-acid polypeptide reads, in one-letter code: Histidine ammonia-lyase (513 aa).

A cross-link (5-imidazolinone (Ala-Gly)) is located at residues 142-144 (ASG). 2,3-didehydroalanine (Ser) is present on S143.

The protein belongs to the PAL/histidase family. In terms of processing, contains an active site 4-methylidene-imidazol-5-one (MIO), which is formed autocatalytically by cyclization and dehydration of residues Ala-Ser-Gly.

The protein localises to the cytoplasm. The enzyme catalyses L-histidine = trans-urocanate + NH4(+). It participates in amino-acid degradation; L-histidine degradation into L-glutamate; N-formimidoyl-L-glutamate from L-histidine: step 1/3. This is Histidine ammonia-lyase from Hyphomonas neptunium (strain ATCC 15444).